Consider the following 623-residue polypeptide: Probable methyltransferase PMT8 (623 aa).

The Cytoplasmic segment spans residues 1–13; the sequence is MMRGRSDGGLKKR. Residues 14 to 34 traverse the membrane as a helical; Signal-anchor for type II membrane protein segment; the sequence is LIASVCVVALFVCFLFMYYGS. The Lumenal segment spans residues 35 to 623; sequence SSQGASALEY…LTSESLRDSE (589 aa). 3 N-linked (GlcNAc...) asparagine glycosylation sites follow: Asn-204, Asn-350, and Asn-588.

The protein belongs to the methyltransferase superfamily.

It localises to the golgi apparatus membrane. This is Probable methyltransferase PMT8 from Arabidopsis thaliana (Mouse-ear cress).